The chain runs to 509 residues: MAKWLNKYFSLGNSKTKSPPQPPRPDYREQRRRGERPSQPPQAVPQASSAASASCGPATASCFSASSGSLPDDSGSTSDLIRAYRAQKERDFEDPYNGPGSSLRKLRAMCRLDYCGGSGEPGGVQRAFSASSASGAAGCCCASSGAGAAASSSSSSGSPHLYRSSSERRPATPAEVRYISPKHRLIKVESAAGGGAGDPLGGACAGGRTWSPTACGGKKLLNKCAASAAEESGAGKKDKVTIADDYSDPFDAKNDLKSKAGKGESAGYMEPYEAQRIMTEFQRQESVRSQHKGIQLYDTPYEPEGQSVDSDSESTVSPRLRESKLPQDDDRPADEYDQPWEWNRVTIPALAAQFNGNEKRQSSPSPSRDRRRQLRAPGGGFKPIKHGSPEFCGILGERVDPAVPLEKQIWYHGAISRGDAENLLRLCKECSYLVRNSQTSKHDYSLSLRSNQGFMHMKLAKTKEKYVLGQNSPPFDSVPEVIHYYTTRKLPIKGAEHLSLLYPVAVRTL.

Disordered regions lie at residues 1-103 (MAKW…GSSL) and 144-178 (SGAGAAASSSSSSGSPHLYRSSSERRPATPAEVRY). The mediates interaction with LAT, PTK2/FAK1, JAK1 and JAK3 stretch occupies residues 1–410 (MAKWLNKYFS…PAVPLEKQIW (410 aa)). The span at 44–61 (VPQASSAASASCGPATAS) shows a compositional bias: low complexity. A compositionally biased stretch (polar residues) spans 62 to 79 (CFSASSGSLPDDSGSTSD). Phosphoserine is present on Ser-102. Residues 144–158 (SGAGAAASSSSSSGS) show a composition bias toward low complexity. Residue Lys-187 forms a Glycyl lysine isopeptide (Lys-Gly) (interchain with G-Cter in SUMO2) linkage. Positions 229-385 (AEESGAGKKD…APGGGFKPIK (157 aa)) are disordered. 2 stretches are compositionally biased toward basic and acidic residues: residues 233–242 (GAGKKDKVTI) and 250–262 (FDAKNDLKSKAGK). A phosphoserine mark is found at Ser-307 and Ser-317. Residues 307-317 (SVDSDSESTVS) show a composition bias toward polar residues. Residues 319–334 (RLRESKLPQDDDRPAD) show a composition bias toward basic and acidic residues. Ser-388 is modified (phosphoserine). Residues 410–504 (WYHGAISRGD…AEHLSLLYPV (95 aa)) enclose the SH2 domain.

Interacts with PTPN11. Interacts with phosphorylated 'Tyr-720' of the ligand-activated receptor PDGFRA via its SH2 domain. Interacts with the ligand-activated receptors PDGFRB, FGFR1, KDR/VEGFR2, IL2RB and IL2RG. Interacts with EPS8 and V-SRC. Interacts with GRB2 and GRAP. Interacts with CD3Z. Interacts with tyrosine-phosphorylated LAT upon T-cell antigen receptor activation. Interacts with PLCG1. Interacts with ZAP70, LCP2/SLP-76, VAV1 and GRAP2. Interacts with JAK1 and JAK3. Interacts with PTK2/FAK1. Interacts with CRK/CrKII. Interacts with IRS2. In terms of processing, phosphorylated upon PDGFRA, PDGFRB, TCR, IL2 receptor, FGFR1 or VEGFR2 activation. As to expression, widely expressed.

Its subcellular location is the cytoplasm. It is found in the cell membrane. Its function is as follows. Adapter protein which regulates several signal transduction cascades by linking activated receptors to downstream signaling components. May play a role in angiogenesis by regulating FGFR1, VEGFR2 and PDGFR signaling. May also play a role in T-cell antigen receptor/TCR signaling, interleukin-2 signaling, apoptosis and neuronal cells differentiation by mediating basic-FGF and NGF-induced signaling cascades. May also regulate IRS1 and IRS2 signaling in insulin-producing cells. The chain is SH2 domain-containing adapter protein B (SHB) from Homo sapiens (Human).